The following is a 347-amino-acid chain: UDP-N-acetylenolpyruvoylglucosamine reductase (347 aa).

The 172-residue stretch at 16–187 folds into the FAD-binding PCMH-type domain; sequence AIEQCSHYLV…IAVGLKLPKT (172 aa). Arginine 163 is an active-site residue. Serine 233 functions as the Proton donor in the catalytic mechanism. The active site involves glutamate 328.

The protein belongs to the MurB family. Requires FAD as cofactor.

It localises to the cytoplasm. It catalyses the reaction UDP-N-acetyl-alpha-D-muramate + NADP(+) = UDP-N-acetyl-3-O-(1-carboxyvinyl)-alpha-D-glucosamine + NADPH + H(+). It participates in cell wall biogenesis; peptidoglycan biosynthesis. Cell wall formation. The protein is UDP-N-acetylenolpyruvoylglucosamine reductase of Vibrio vulnificus (strain YJ016).